Consider the following 133-residue polypeptide: Large-conductance mechanosensitive channel (133 aa).

2 helical membrane passes run Val-14 to Leu-34 and Gly-67 to Val-87.

Belongs to the MscL family. As to quaternary structure, homopentamer.

Its subcellular location is the cell membrane. Channel that opens in response to stretch forces in the membrane lipid bilayer. May participate in the regulation of osmotic pressure changes within the cell. The polypeptide is Large-conductance mechanosensitive channel (Bacillus cereus (strain AH187)).